Here is a 356-residue protein sequence, read N- to C-terminus: UDP-N-acetylglucosamine--N-acetylmuramyl-(pentapeptide) pyrophosphoryl-undecaprenol N-acetylglucosamine transferase (356 aa).

UDP-N-acetyl-alpha-D-glucosamine is bound by residues 12–14, Asn-124, Arg-163, Ser-188, Ile-242, and Gln-287; that span reads TGG.

This sequence belongs to the glycosyltransferase 28 family. MurG subfamily.

It localises to the cell inner membrane. The catalysed reaction is di-trans,octa-cis-undecaprenyl diphospho-N-acetyl-alpha-D-muramoyl-L-alanyl-D-glutamyl-meso-2,6-diaminopimeloyl-D-alanyl-D-alanine + UDP-N-acetyl-alpha-D-glucosamine = di-trans,octa-cis-undecaprenyl diphospho-[N-acetyl-alpha-D-glucosaminyl-(1-&gt;4)]-N-acetyl-alpha-D-muramoyl-L-alanyl-D-glutamyl-meso-2,6-diaminopimeloyl-D-alanyl-D-alanine + UDP + H(+). It participates in cell wall biogenesis; peptidoglycan biosynthesis. In terms of biological role, cell wall formation. Catalyzes the transfer of a GlcNAc subunit on undecaprenyl-pyrophosphoryl-MurNAc-pentapeptide (lipid intermediate I) to form undecaprenyl-pyrophosphoryl-MurNAc-(pentapeptide)GlcNAc (lipid intermediate II). This is UDP-N-acetylglucosamine--N-acetylmuramyl-(pentapeptide) pyrophosphoryl-undecaprenol N-acetylglucosamine transferase from Pseudomonas savastanoi pv. phaseolicola (strain 1448A / Race 6) (Pseudomonas syringae pv. phaseolicola (strain 1448A / Race 6)).